A 143-amino-acid chain; its full sequence is MAMAYKMATEGMNVKEECQRWFMEMKWKKVHRFVVYKIDERSRAVLVDKVGGPGEGYEELVAALPTDDCRYAVFDFDFVTVDNCQKSKIFFIAWSPTASRIRAKILYATSKQGLRRVLDGVHYEVQATDSSEMGYDVIRGRAQ.

Residues 11–143 (GMNVKEECQR…GYDVIRGRAQ (133 aa)) form the ADF-H domain.

It belongs to the actin-binding proteins ADF family.

In terms of biological role, actin-depolymerizing protein. Severs actin filaments (F-actin) and binds to actin monomers. The chain is Actin-depolymerizing factor 5 (ADF5) from Oryza sativa subsp. japonica (Rice).